An 87-amino-acid chain; its full sequence is MTNKLKKMLKFPCTFTYKVIGLAQPELTNNIIKIIQNHIPGDYAPQIKSSNKGTYLSISITICAKNFKQIKNLYNELSKIHLVRMVL.

The protein belongs to the UPF0250 family.

The sequence is that of UPF0250 protein BCc_307 from Buchnera aphidicola subsp. Cinara cedri (strain Cc).